A 743-amino-acid polypeptide reads, in one-letter code: Polyribonucleotide nucleotidyltransferase (743 aa).

2 residues coordinate Mg(2+): Asp489 and Asp495. Residues 556–618 (PRIEKMHIGK…PCIDAAIGMI (63 aa)) enclose the KH domain. The region spanning 628-698 (GETYPGKITS…KTGKFKLSRK (71 aa)) is the S1 motif domain. The interval 704–743 (PEGYVEPQPRERRERREGGREGGRNFERRGGDRDHREPRG) is disordered.

It belongs to the polyribonucleotide nucleotidyltransferase family. It depends on Mg(2+) as a cofactor.

The protein localises to the cytoplasm. The enzyme catalyses RNA(n+1) + phosphate = RNA(n) + a ribonucleoside 5'-diphosphate. Its function is as follows. Involved in mRNA degradation. Catalyzes the phosphorolysis of single-stranded polyribonucleotides processively in the 3'- to 5'-direction. This is Polyribonucleotide nucleotidyltransferase from Porphyromonas gingivalis (strain ATCC BAA-308 / W83).